We begin with the raw amino-acid sequence, 2410 residues long: Genome polyprotein 1 (2410 aa).

Residues 1–22 (MEQTLAQAVSRKSKTDTPMAEE) are disordered. Positions 474–632 (KMADANNCWS…AARKYPLHVE (159 aa)) constitute a Helicase ATP-binding domain. 487–494 (GHTGSGKS) is a binding site for ATP. Positions 647 to 813 (GGGDLLDISK…NVPFYMNETF (167 aa)) constitute a Helicase C-terminal domain. O-(5'-phospho-RNA)-tyrosine is present on Y1234. Residues 1359 to 1573 (ITLEASTGIL…CGYASHTALF (215 aa)) form the Peptidase C4 domain. Active-site for nuclear inclusion protein A activity residues include H1404, D1440, and C1507. One can recognise a RdRp catalytic domain in the interval 1857 to 1980 (WLHGSGDGSR…AISPQFDEEF (124 aa)). Positions 2173-2200 (TRTPTEDDGKLKTPSGARIPSSAADGNW) are disordered.

The protein belongs to the bymoviruses polyprotein 1 family. VPg is uridylylated by the polymerase and is covalently attached to the 5'-end of the genomic RNA. This uridylylated form acts as a nucleotide-peptide primer for the polymerase. In terms of processing, the viral RNA1 of bymoviruses is expressed as a single polyprotein which undergoes post-translational proteolytic processing by the main proteinase NIa-pro resulting in the production of at least eight individual proteins.

It is found in the host cytoplasmic vesicle. The protein resides in the virion. The catalysed reaction is RNA(n) + a ribonucleoside 5'-triphosphate = RNA(n+1) + diphosphate. It carries out the reaction Hydrolyzes glutaminyl bonds, and activity is further restricted by preferences for the amino acids in P6 - P1' that vary with the species of potyvirus, e.g. Glu-Xaa-Xaa-Tyr-Xaa-Gln-|-(Ser or Gly) for the enzyme from tobacco etch virus. The natural substrate is the viral polyprotein, but other proteins and oligopeptides containing the appropriate consensus sequence are also cleaved.. Functionally, indispensable for virus replication. Mediates the cap-independent, EIF4E-dependent translation of viral genomic RNAs. Binds to the cap-binding site of host EIF4E and thus interferes with the host EIF4E-dependent mRNA export and translation. VPg-RNA directly binds EIF4E and is a template for transcription. Also forms trimeric complexes with EIF4E-EIF4G, which are templates for translation. Its function is as follows. Has RNA-binding and proteolytic activities. In terms of biological role, an RNA-dependent RNA polymerase that plays an essential role in the virus replication. This Hordeum vulgare (Barley) protein is Genome polyprotein 1.